The chain runs to 4241 residues: Intermembrane lipid transfer protein vps13E (4241 aa).

The Chorein N-terminal domain maps to 5–97 (ILPGLLKKIL…GPKDIINTFS (93 aa)). Residues 120 to 140 (IDSNSNNNNKKNAPSSSSSND) are compositionally biased toward low complexity. Disordered regions lie at residues 120 to 143 (IDSN…DDFF), 234 to 340 (LSKN…QQQQ), 942 to 986 (LGTG…VEKE), 1220 to 1256 (NNNN…NQKP), 1345 to 1369 (TTTT…QNRH), 1534 to 1571 (KPSS…YNNN), 2148 to 2192 (QQQQ…PNVH), and 2217 to 2282 (VTEK…NNIN). Over residues 234–254 (LSKNTSTHQQQQPTFNPYVGS) the composition is skewed to polar residues. A compositionally biased stretch (low complexity) spans 255 to 264 (QQQQQQQPQQ). Polar residues predominate over residues 279–289 (FMNNKNSDEGI). 3 stretches are compositionally biased toward low complexity: residues 290 to 313 (SSSS…LNDN), 325 to 340 (QPTP…QQQQ), and 942 to 952 (LGTGNGINNNN). Over residues 968 to 986 (DDGKYPEQDDLDDSKVEKE) the composition is skewed to basic and acidic residues. Residues 1220–1253 (NNNNNNNNNNNNNNNNNNNNNRNLNNNNNNNNNN) show a composition bias toward low complexity. Positions 1352–1369 (RYHHQNHHNHQHKKQNRH) are enriched in basic residues. Composition is skewed to low complexity over residues 1538–1551 (KDNN…NNSD), 1559–1571 (DSSS…YNNN), and 2148–2177 (QQQQ…NNNN). Residues 2178 to 2188 (VSGNTINNKSV) are compositionally biased toward polar residues. Over residues 2246–2259 (SDDDDDEGEDEDIG) the composition is skewed to acidic residues. Positions 2265–2282 (DHSTSSAPTSRSNYNNIN) are enriched in polar residues. The region spanning 2825 to 3134 (KIVFYNQYWI…IPYVWDLPLE (310 aa)) is the SHR-BD domain. Disordered regions lie at residues 3973–4000 (PTTT…YPTE), 4059–4094 (YQHS…RQLQ), and 4109–4140 (KSMA…SGSG). Low complexity predominate over residues 3974 to 3984 (TTTTTTNTTTT). Over residues 3985–4000 (PYQSSQNIHSTPYPTE) the composition is skewed to polar residues. Positions 4128 to 4140 (SNNRLSLTPSGSG) are enriched in polar residues.

Belongs to the VPS13 family.

Its subcellular location is the membrane. Its function is as follows. Mediates the transfer of lipids between membranes at organelle contact sites. The sequence is that of Intermembrane lipid transfer protein vps13E (vps13E) from Dictyostelium discoideum (Social amoeba).